The chain runs to 424 residues: Serine--tRNA ligase (424 aa).

Residue 230-232 (TAE) participates in L-serine binding. 261 to 263 (RSE) lines the ATP pocket. Position 284 (Glu284) interacts with L-serine. 348–351 (EISS) serves as a coordination point for ATP. Ser384 provides a ligand contact to L-serine.

Belongs to the class-II aminoacyl-tRNA synthetase family. Type-1 seryl-tRNA synthetase subfamily. In terms of assembly, homodimer. The tRNA molecule binds across the dimer.

The protein resides in the cytoplasm. The catalysed reaction is tRNA(Ser) + L-serine + ATP = L-seryl-tRNA(Ser) + AMP + diphosphate + H(+). It carries out the reaction tRNA(Sec) + L-serine + ATP = L-seryl-tRNA(Sec) + AMP + diphosphate + H(+). It functions in the pathway aminoacyl-tRNA biosynthesis; selenocysteinyl-tRNA(Sec) biosynthesis; L-seryl-tRNA(Sec) from L-serine and tRNA(Sec): step 1/1. Functionally, catalyzes the attachment of serine to tRNA(Ser). Is also able to aminoacylate tRNA(Sec) with serine, to form the misacylated tRNA L-seryl-tRNA(Sec), which will be further converted into selenocysteinyl-tRNA(Sec). The polypeptide is Serine--tRNA ligase (Streptococcus pneumoniae serotype 2 (strain D39 / NCTC 7466)).